Here is a 583-residue protein sequence, read N- to C-terminus: Kelch-like protein 38 (583 aa).

One can recognise a BTB domain in the interval 34–101; it reads TDVILCTEDK…IYTGSITITM (68 aa). In terms of domain architecture, BACK spans 136–237; sequence CLSMIRLSEI…HPTYLFQFIA (102 aa). Kelch repeat units lie at residues 285-332, 333-385, 386-433, 435-481, 482-523, and 525-575; these read TLVV…CIHS, ILYV…SYLH, FIFA…ANDQ, IYVF…VIED, KIYI…VINN, and LYVT…PLIC.

The polypeptide is Kelch-like protein 38 (klhl38) (Danio rerio (Zebrafish)).